We begin with the raw amino-acid sequence, 1093 residues long: Carbamoyl phosphate synthase large chain (1093 aa).

Residues 1–412 (MPRRNDIRKI…SLMKALRSLE (412 aa)) are carboxyphosphate synthetic domain. ATP contacts are provided by Arg-139, Arg-179, Gly-185, Gly-186, Glu-218, Val-220, Glu-225, Gly-251, Val-252, His-253, Gln-295, and Glu-309. One can recognise an ATP-grasp 1 domain in the interval 143–338 (KDAMTRIGLD…IAKIAAKLAV (196 aa)). Mg(2+) contacts are provided by Gln-295, Glu-309, and Asn-311. Mn(2+)-binding residues include Gln-295, Glu-309, and Asn-311. The interval 413–560 (TGKRVGAEVL…YSSYEEEDEA (148 aa)) is oligomerization domain. The segment at 561 to 952 (PQTDKRKVII…AFAKAQLSAG (392 aa)) is carbamoyl phosphate synthetic domain. One can recognise an ATP-grasp 2 domain in the interval 689-880 (GKLLEQLQIP…LAKIASRLMT (192 aa)). ATP contacts are provided by Arg-725, His-764, Leu-766, Glu-771, Gly-796, Ile-797, His-798, Ser-799, Gln-839, and Glu-851. Residues Gln-839, Glu-851, and Asn-853 each contribute to the Mg(2+) site. Mn(2+) contacts are provided by Gln-839, Glu-851, and Asn-853. Positions 953 to 1093 (LILPSSGTVF…QLLHAGHAVK (141 aa)) constitute an MGS-like domain. The segment at 953-1093 (LILPSSGTVF…QLLHAGHAVK (141 aa)) is allosteric domain.

Belongs to the CarB family. As to quaternary structure, composed of two chains; the small (or glutamine) chain promotes the hydrolysis of glutamine to ammonia, which is used by the large (or ammonia) chain to synthesize carbamoyl phosphate. Tetramer of heterodimers (alpha,beta)4. Mg(2+) is required as a cofactor. Requires Mn(2+) as cofactor.

It carries out the reaction hydrogencarbonate + L-glutamine + 2 ATP + H2O = carbamoyl phosphate + L-glutamate + 2 ADP + phosphate + 2 H(+). The catalysed reaction is hydrogencarbonate + NH4(+) + 2 ATP = carbamoyl phosphate + 2 ADP + phosphate + 2 H(+). It participates in amino-acid biosynthesis; L-arginine biosynthesis; carbamoyl phosphate from bicarbonate: step 1/1. Its pathway is pyrimidine metabolism; UMP biosynthesis via de novo pathway; (S)-dihydroorotate from bicarbonate: step 1/3. Functionally, large subunit of the glutamine-dependent carbamoyl phosphate synthetase (CPSase). CPSase catalyzes the formation of carbamoyl phosphate from the ammonia moiety of glutamine, carbonate, and phosphate donated by ATP, constituting the first step of 2 biosynthetic pathways, one leading to arginine and/or urea and the other to pyrimidine nucleotides. The large subunit (synthetase) binds the substrates ammonia (free or transferred from glutamine from the small subunit), hydrogencarbonate and ATP and carries out an ATP-coupled ligase reaction, activating hydrogencarbonate by forming carboxy phosphate which reacts with ammonia to form carbamoyl phosphate. The chain is Carbamoyl phosphate synthase large chain from Acidobacterium capsulatum (strain ATCC 51196 / DSM 11244 / BCRC 80197 / JCM 7670 / NBRC 15755 / NCIMB 13165 / 161).